We begin with the raw amino-acid sequence, 350 residues long: NADH-quinone oxidoreductase subunit H (350 aa).

A run of 8 helical transmembrane segments spans residues 5 to 25 (FIIEKSVVIVVVFAVTMIMAM), 76 to 96 (FLFVVGPAIAMSTALMTSAVI), 118 to 138 (IALLYIFGVLSVGVYGIMIGG), 162 to 182 (IAMGLSMIALLMMTGTMSLKV), 190 to 210 (MNWNVFYQPLSFLIFLICSFA), 243 to 263 (LFAEYASMFISSTIISVLFFG), 284 to 304 (LLGIAVLFVKICFFIFFYMWV), and 319 to 339 (LGWRILIPLSIINIMITGAVI).

Belongs to the complex I subunit 1 family. In terms of assembly, NDH-1 is composed of 14 different subunits. Subunits NuoA, H, J, K, L, M, N constitute the membrane sector of the complex.

It is found in the cell inner membrane. It carries out the reaction a quinone + NADH + 5 H(+)(in) = a quinol + NAD(+) + 4 H(+)(out). Its function is as follows. NDH-1 shuttles electrons from NADH, via FMN and iron-sulfur (Fe-S) centers, to quinones in the respiratory chain. The immediate electron acceptor for the enzyme in this species is believed to be ubiquinone. Couples the redox reaction to proton translocation (for every two electrons transferred, four hydrogen ions are translocated across the cytoplasmic membrane), and thus conserves the redox energy in a proton gradient. This subunit may bind ubiquinone. This chain is NADH-quinone oxidoreductase subunit H, found in Flavobacterium johnsoniae (strain ATCC 17061 / DSM 2064 / JCM 8514 / BCRC 14874 / CCUG 350202 / NBRC 14942 / NCIMB 11054 / UW101) (Cytophaga johnsonae).